We begin with the raw amino-acid sequence, 314 residues long: Ribosomal protein L11 methyltransferase (314 aa).

Residues T161, G182, D204, and N248 each coordinate S-adenosyl-L-methionine.

The protein belongs to the methyltransferase superfamily. PrmA family.

It localises to the cytoplasm. It catalyses the reaction L-lysyl-[protein] + 3 S-adenosyl-L-methionine = N(6),N(6),N(6)-trimethyl-L-lysyl-[protein] + 3 S-adenosyl-L-homocysteine + 3 H(+). Its function is as follows. Methylates ribosomal protein L11. This Listeria monocytogenes serotype 4b (strain CLIP80459) protein is Ribosomal protein L11 methyltransferase.